Consider the following 921-residue polypeptide: Phototropin-1A (921 aa).

Over residues 1 to 11 (MASKGTEGGHG) the composition is skewed to gly residues. Disordered stretches follow at residues 1 to 59 (MASK…SPFL) and 88 to 118 (TGLP…QSAA). The span at 40-51 (SSASSFRTAAAA) shows a compositional bias: low complexity. Polar residues predominate over residues 97-117 (RPSSGSARTSSEDNPQQQQSA). In terms of domain architecture, PAS 1 spans 123-197 (VSEELRAALS…KIRQSLANGS (75 aa)). FMN is bound by residues 172 to 177 (NCRFLQ), Arg190, Asn205, Asn215, and Gln236. An S-4a-FMN cysteine modification is found at Cys173. A PAC 1 domain is found at 197–251 (SNYCGRILNYKKDGTPFWNLLTIAPIKDEDGRLLKFIGMQVEVSKYTEGKKDTVV). Polar residues predominate over residues 286-295 (RSLSESSNNT). Disordered stretches follow at residues 286–347 (RSLS…NRTR) and 364–390 (SVEK…ESFE). Basic and acidic residues-rich tracts occupy residues 312 to 321 (PSKRSSESGS) and 364 to 376 (SVEK…RDED). The PAS 2 domain occupies 400–473 (RGIDLATTLE…RKIRDAIDNQ (74 aa)). Residues 449-454 (NCRFLQ), Arg467, Asn482, Asn492, and Gln513 contribute to the FMN site. Residue Cys450 is modified to S-4a-FMN cysteine. Positions 474-528 (AEVTVQLINYTKSGKKFWNLFHLQPMRDQKGDVQYFIGVQLDGTEHVQDDAAKEG) constitute a PAC 2 domain. In terms of domain architecture, Protein kinase spans 594-881 (FRPVKPLGSG…ANEIKGHPFF (288 aa)). ATP-binding positions include 600-608 (LGSGDTGSV) and Lys623. Asp719 serves as the catalytic Proton acceptor.

It belongs to the protein kinase superfamily. Ser/Thr protein kinase family. As to quaternary structure, homodimer. FMN is required as a cofactor. Post-translationally, autophosphorylated in response to blue light irradiation. In terms of processing, 2 molecules of FMN bind covalently to cysteines after exposure to blue light and are reversed in the dark. In terms of tissue distribution, highly expressed in coleoptiles of dark-grown seedlings.

It carries out the reaction L-seryl-[protein] + ATP = O-phospho-L-seryl-[protein] + ADP + H(+). The catalysed reaction is L-threonyl-[protein] + ATP = O-phospho-L-threonyl-[protein] + ADP + H(+). In terms of biological role, protein kinase that acts as a blue light photoreceptor in a signal-transduction pathway for phototropic responses. Regulates a wide range of physiological activities in plants that maximize the efficiency of photosynthesis, such as chloroplast relocations, stomata opening, and leaf expansion. The chain is Phototropin-1A (PHOT1A) from Oryza sativa subsp. japonica (Rice).